The following is a 1036-amino-acid chain: Non-canonical non-ribosomal peptide synthetase FUB8 (1036 aa).

The adenylation (A) domain stretch occupies residues 21–343 (EIARDEPDRV…LASVVTHPDE (323 aa)). Positions 544 to 621 (TTEDVVRSGI…QLAHTVWSHL (78 aa)) constitute a Carrier domain. An O-(pantetheine 4'-phosphoryl)serine modification is found at S579. Positions 658-899 (LTGTTGEIGS…IPIDLLTEVI (242 aa)) are thioester reductase (TR) domain.

The protein operates within mycotoxin biosynthesis. Non-canonical non-ribosomal peptide synthetase; part of the gene cluster that mediates the biosynthesis of fusaric acid, a mycotoxin with low to moderate toxicity to animals and humans, but with high phytotoxic properties. L-aspartate is suggested as fusaric acid amino acid precursor that is activated and further processed to O-acetyl-L-homoserine by cluster enzymes aspartate kinase FUB3 and homoserine O-acetyltransferase FUB5, as well as enzymes of the primary metabolism. The polyketide synthase (PKS) FUB1 generates the triketide trans-2-hexenal which is presumptively released by the hydrolase FUB4 and linked to the NRPS-bound amino acid precursor by NAD(P)-dependent dehydrogenase FUB6. FUB1, FUB4, and the non-canonical NRPS Fub8 may form an enzyme complex. Further processing of the NRPS-bound intermediate might be carried out by FUB6 and the sulfhydrylase FUB7, enabling a spontaneous electrocyclization to close the carbon backbone of fusaric acid. Dihydrofusaric acid is likely to be released via reduction by the thioester reductase (TR) domain of FUB8 whereupon the final oxidation to fusaric acid may (also) be performed by the FMN-dependent dehydrogenase FUB9. In Fusarium oxysporum f. sp. lycopersici (strain 4287 / CBS 123668 / FGSC 9935 / NRRL 34936) (Fusarium vascular wilt of tomato), this protein is Non-canonical non-ribosomal peptide synthetase FUB8.